Reading from the N-terminus, the 413-residue chain is Probable Xaa-Pro aminopeptidase UREG_07123 (413 aa).

4 residues coordinate Mn(2+): Asp194, Asp205, Glu340, and Glu379.

It belongs to the peptidase M24B family. Requires Mn(2+) as cofactor.

The catalysed reaction is Release of any N-terminal amino acid, including proline, that is linked to proline, even from a dipeptide or tripeptide.. Catalyzes the removal of a penultimate prolyl residue from the N-termini of peptides. The polypeptide is Probable Xaa-Pro aminopeptidase UREG_07123 (Uncinocarpus reesii (strain UAMH 1704)).